Here is a 348-residue protein sequence, read N- to C-terminus: Protein RecA (348 aa).

66 to 73 provides a ligand contact to ATP; the sequence is GPESSGKT.

It belongs to the RecA family.

Its subcellular location is the cytoplasm. Its function is as follows. Can catalyze the hydrolysis of ATP in the presence of single-stranded DNA, the ATP-dependent uptake of single-stranded DNA by duplex DNA, and the ATP-dependent hybridization of homologous single-stranded DNAs. It interacts with LexA causing its activation and leading to its autocatalytic cleavage. The polypeptide is Protein RecA (Legionella pneumophila (strain Lens)).